The following is a 344-amino-acid chain: GTP 3',8-cyclase (344 aa).

One can recognise a Radical SAM core domain in the interval 19–245 (PFGRAVTYLR…DIPYRTGGPA (227 aa)). R28 contributes to the GTP binding site. 2 residues coordinate [4Fe-4S] cluster: C35 and C39. S-adenosyl-L-methionine is bound at residue Y41. Residue C42 participates in [4Fe-4S] cluster binding. R77 provides a ligand contact to GTP. An S-adenosyl-L-methionine-binding site is contributed by G81. T111 contacts GTP. S135 is a binding site for S-adenosyl-L-methionine. Residue K171 participates in GTP binding. M205 provides a ligand contact to S-adenosyl-L-methionine. 2 residues coordinate [4Fe-4S] cluster: C268 and C271. Residue 273–275 (RVR) participates in GTP binding. C285 is a binding site for [4Fe-4S] cluster.

The protein belongs to the radical SAM superfamily. MoaA family. Monomer and homodimer. It depends on [4Fe-4S] cluster as a cofactor.

It carries out the reaction GTP + AH2 + S-adenosyl-L-methionine = (8S)-3',8-cyclo-7,8-dihydroguanosine 5'-triphosphate + 5'-deoxyadenosine + L-methionine + A + H(+). It functions in the pathway cofactor biosynthesis; molybdopterin biosynthesis. Its function is as follows. Catalyzes the cyclization of GTP to (8S)-3',8-cyclo-7,8-dihydroguanosine 5'-triphosphate. The polypeptide is GTP 3',8-cyclase (Brucella canis (strain ATCC 23365 / NCTC 10854 / RM-666)).